A 252-amino-acid chain; its full sequence is Large ribosomal subunit protein uL30 (252 aa).

This sequence belongs to the universal ribosomal protein uL30 family.

Functionally, binds to G-rich structures in 28S rRNA and in mRNAs. Plays a regulatory role in the translation apparatus; inhibits cell-free translation of mRNAs. This chain is Large ribosomal subunit protein uL30 (RpL7), found in Drosophila melanogaster (Fruit fly).